Here is a 1124-residue protein sequence, read N- to C-terminus: MSTTRPSQSSNNSGRSRNSARIIAQTTVDAKLHATFEESGSSFDYSSSVRVSGSVDGDQQPRSNKVTTAYLNHIQRGKQIQPFGCLLALDEKTCKVVAYSENAPEMLTMVSHAVPSVGDHPALGIGTDIRTVFTAPSASALQKALGFAEVSLLNPILVHCKTSGKPFYAIIHRVTGSLIIDFEPVKPYEVPMTAAGALQSYKLAAKAITRLQSLASGSMERLCDTMVQEVFELTGYDRVMAYKFHEDDHGEVIAEIAKPGLEPYLGLHYPATDIPQAARFLFMKNKVRMIVDCNAKHVKVLQDEKLPFDLTLCGSTLRAPHSCHLQYMANMDSIASLVMAVVVNDSDEDGDSADAVLPQKKKRLWGLVVCHNTTPRFVPFPLRYACEFLAQVFAIHVNKEIELEYQILEKNILRTQTLLCDMLMRDAPLGIVSQSPNIMDLVKCDGAALFYRNKLWLLGATPTESQLREIALWMSEYHTDSTGLSTDSLSDAGFPGALSLSDTVCGMAAVRITSKDIVFWFRSHTAAEIRWGGAKHEPGDQDDGRKMHPRSSFKAFLEVVKARSVPWKDFEMDAIHSLQLILRNASKDTDIIDLNTKAINTRLNDLKIEGMQELEAVTSEMVRLIETATVPILAVDVDGTVNGWNIKIAELTGLPVGEAIGKHLLTLVEDSSTDIVKKMLNLALQGEEEKNVQFEIKTHGDQVESGPISLIVNACASKDLRENVVGVCFVAQDITAQKTVMDKFTRIEGDYKAIVQNPNQLIPPIFGTDEFGWCCEWNAAMIKLTGWKREEVMDKMLLGEVFGTQMSCCRLKNQEAFVNFGIVLNKAMTGLETEKVPFGFFSRKGKYVECLLSVSKKIDAEGLVTGVFCFLQLASPELQQALHIQRLSEQTALKRLKVLTYMKRQIRNPLAGIVFSSKMLEGTDLETEQKRIVNTSSQCQRQLSKILDDSDLDGIIDGYLDLEMAEFTLHEVLVTSLSQVMNRSNTKGIRIANDVAEHIARETLYGDSLRLQQVLADFLLISINSTPNGGQVVIAASLTKEQLGKSVHLVNLELSITHGGSGVPEAALNQMFGNNVLESEEGISLHISRKLLKLMNGDVRYLKEAGKSSFILSVELAAAHKLKG.

Residues 1–19 are compositionally biased toward low complexity; the sequence is MSTTRPSQSSNNSGRSRNS. The interval 1 to 21 is disordered; that stretch reads MSTTRPSQSSNNSGRSRNSAR. In terms of domain architecture, GAF spans 218 to 401; it reads SMERLCDTMV…VFAIHVNKEI (184 aa). Cys-323 is a phytochromobilin binding site. 2 consecutive PAS domains span residues 617–687 and 750–821; these read VTSE…LQGE and DYKA…VNFG. One can recognise a Histidine kinase domain in the interval 901–1120; that stretch reads YMKRQIRNPL…ILSVELAAAH (220 aa).

It belongs to the phytochrome family. Homodimer. Contains one covalently linked phytochromobilin chromophore.

Its function is as follows. Regulatory photoreceptor which exists in two forms that are reversibly interconvertible by light: the Pr form that absorbs maximally in the red region of the spectrum and the Pfr form that absorbs maximally in the far-red region. Photoconversion of Pr to Pfr induces an array of morphogenic responses, whereas reconversion of Pfr to Pr cancels the induction of those responses. Pfr controls the expression of a number of nuclear genes including those encoding the small subunit of ribulose-bisphosphate carboxylase, chlorophyll A/B binding protein, protochlorophyllide reductase, rRNA, etc. It also controls the expression of its own gene(s) in a negative feedback fashion. In Pisum sativum (Garden pea), this protein is Phytochrome A (PHYA).